A 553-amino-acid chain; its full sequence is MDIKRTVLWVIFFMSAVMLYDNWQRDHGRPSMFFPSATHTAPAAAGGASGTGATTTAGDVPAAAAGAAPSTTAPAAQAQLVKFSTDVYDGEIDTRGGTLAKLTLKKQGDGKQPDLYITLFDHTAGHTYLARTGLLGGDFPNHNDVYTQLNPGSTSLTGDQNTLKLSFESPVKGGVKVVKTYTFTRGSYVIGVDTKIDNVGTAPVTPTVYMELVRDNTAVETPMFSHTFLGPAVYTDAKHFQKIDFSDLDKNKANFEKSADNGWVAMVQHYFASAWIPQQGAKRDIYAEKIDPALYRVGVKQPVAAIAPGQSADVQARLFAGPEEERMLEGIAPGLELVKDYGWVTIIAKPLFWLLEKIHGYVGNWGWAIVLLTVLIKAVFFPLSAASYKSMARMKEITPRMQALRERFKSDPQKMNAALMELYKTEKVNPFGGCLPVVIQIPVFISLYWVLLASVEMRGAPWILWIHDLSQRDPFFILPVLMAVSMFVQTSLNPTPPDPVQAKMMKFMPIAFSVMFFFFPAGLVLYYVVNNVLSIAQQYYITRKLGGVKKKPA.

Helical transmembrane passes span 7–24, 365–385, 435–455, 474–494, and 509–529; these read VLWV…DNWQ, WGWA…PLSA, LPVV…LASV, PFFI…SLNP, and PIAF…YYVV.

The protein belongs to the OXA1/ALB3/YidC family. Type 1 subfamily. Interacts with the Sec translocase complex via SecD. Specifically interacts with transmembrane segments of nascent integral membrane proteins during membrane integration.

It is found in the cell inner membrane. In terms of biological role, required for the insertion and/or proper folding and/or complex formation of integral membrane proteins into the membrane. Involved in integration of membrane proteins that insert both dependently and independently of the Sec translocase complex, as well as at least some lipoproteins. Aids folding of multispanning membrane proteins. In Burkholderia orbicola (strain MC0-3), this protein is Membrane protein insertase YidC.